A 459-amino-acid polypeptide reads, in one-letter code: Cysteine--tRNA ligase (459 aa).

Residue Cys29 coordinates Zn(2+). The 'HIGH' region motif lies at 31 to 41 (PTVYDRAHIGN). Zn(2+) is bound by residues Cys209, His234, and Glu238. The short motif at 267–271 (KMSKS) is the 'KMSKS' region element. Lys270 serves as a coordination point for ATP.

This sequence belongs to the class-I aminoacyl-tRNA synthetase family. Monomer. The cofactor is Zn(2+).

The protein localises to the cytoplasm. The enzyme catalyses tRNA(Cys) + L-cysteine + ATP = L-cysteinyl-tRNA(Cys) + AMP + diphosphate. The polypeptide is Cysteine--tRNA ligase (Rhodospirillum rubrum (strain ATCC 11170 / ATH 1.1.1 / DSM 467 / LMG 4362 / NCIMB 8255 / S1)).